The primary structure comprises 885 residues: Alanine--tRNA ligase (885 aa).

The span at 426–444 (QEQKTRARQDRREKQRGGA) shows a compositional bias: basic and acidic residues. The interval 426–445 (QEQKTRARQDRREKQRGGAE) is disordered. His-568, His-572, Cys-671, and His-675 together coordinate Zn(2+).

This sequence belongs to the class-II aminoacyl-tRNA synthetase family. It depends on Zn(2+) as a cofactor.

The protein localises to the cytoplasm. It carries out the reaction tRNA(Ala) + L-alanine + ATP = L-alanyl-tRNA(Ala) + AMP + diphosphate. Its function is as follows. Catalyzes the attachment of alanine to tRNA(Ala) in a two-step reaction: alanine is first activated by ATP to form Ala-AMP and then transferred to the acceptor end of tRNA(Ala). Also edits incorrectly charged Ser-tRNA(Ala) and Gly-tRNA(Ala) via its editing domain. This Chlorobium phaeovibrioides (strain DSM 265 / 1930) (Prosthecochloris vibrioformis (strain DSM 265)) protein is Alanine--tRNA ligase.